Reading from the N-terminus, the 255-residue chain is Geranylgeranylglyceryl phosphate synthase (255 aa).

Residues aspartate 31 and serine 60 each contribute to the Mg(2+) site. Residues 179-185 (YLEAGSG), 211-212 (GG), and 233-234 (GT) each bind sn-glycerol 1-phosphate.

The protein belongs to the GGGP/HepGP synthase family. Group II subfamily. The cofactor is Mg(2+).

Its subcellular location is the cytoplasm. The catalysed reaction is sn-glycerol 1-phosphate + (2E,6E,10E)-geranylgeranyl diphosphate = sn-3-O-(geranylgeranyl)glycerol 1-phosphate + diphosphate. It functions in the pathway membrane lipid metabolism; glycerophospholipid metabolism. Its function is as follows. Prenyltransferase that catalyzes the transfer of the geranylgeranyl moiety of geranylgeranyl diphosphate (GGPP) to the C3 hydroxyl of sn-glycerol-1-phosphate (G1P). This reaction is the first ether-bond-formation step in the biosynthesis of archaeal membrane lipids. The sequence is that of Geranylgeranylglyceryl phosphate synthase from Methanothrix thermoacetophila (strain DSM 6194 / JCM 14653 / NBRC 101360 / PT) (Methanosaeta thermophila).